Consider the following 296-residue polypeptide: Pseudouridine-5'-phosphate glycosidase (296 aa).

E21 (proton donor) is an active-site residue. Substrate is bound by residues K81 and V101. D130 provides a ligand contact to Mn(2+). A substrate-binding site is contributed by 132–134 (SQD). K151 acts as the Nucleophile in catalysis.

Belongs to the pseudouridine-5'-phosphate glycosidase family. As to quaternary structure, homotrimer. It depends on Mn(2+) as a cofactor.

The catalysed reaction is D-ribose 5-phosphate + uracil = psi-UMP + H2O. Its function is as follows. Catalyzes the reversible cleavage of pseudouridine 5'-phosphate (PsiMP) to ribose 5-phosphate and uracil. Functions biologically in the cleavage direction, as part of a pseudouridine degradation pathway. In Fervidobacterium nodosum (strain ATCC 35602 / DSM 5306 / Rt17-B1), this protein is Pseudouridine-5'-phosphate glycosidase.